A 113-amino-acid polypeptide reads, in one-letter code: ATP-dependent Clp protease adapter protein ClpS (113 aa).

It belongs to the ClpS family. As to quaternary structure, binds to the N-terminal domain of the chaperone ClpA.

Involved in the modulation of the specificity of the ClpAP-mediated ATP-dependent protein degradation. The polypeptide is ATP-dependent Clp protease adapter protein ClpS (Leptospira biflexa serovar Patoc (strain Patoc 1 / Ames)).